The primary structure comprises 335 residues: Nucleoid-associated protein PP_0973 (335 aa).

It belongs to the YejK family.

It localises to the cytoplasm. It is found in the nucleoid. The sequence is that of Nucleoid-associated protein PP_0973 from Pseudomonas putida (strain ATCC 47054 / DSM 6125 / CFBP 8728 / NCIMB 11950 / KT2440).